The following is a 221-amino-acid chain: Carbonic anhydrase (221 aa).

Zn(2+) is bound by residues cysteine 38, aspartate 40, histidine 99, and cysteine 102.

It belongs to the beta-class carbonic anhydrase family. It depends on Zn(2+) as a cofactor.

The enzyme catalyses hydrogencarbonate + H(+) = CO2 + H2O. This Helicobacter pylori (strain J99 / ATCC 700824) (Campylobacter pylori J99) protein is Carbonic anhydrase (cynT).